A 687-amino-acid polypeptide reads, in one-letter code: Geranylgeranyl transferase type-2 subunit alpha 2 (687 aa).

PFTA repeat units follow at residues 38-72, 83-117, 132-167, 168-203, and 214-248; these read YTKE…SRLD, IIDE…KKGH, YQKQ…LTKT, SEED…SLVA, and TIRR…QTVK. 5 LRR repeats span residues 523 to 545, 546 to 567, 568 to 591, 592 to 616, and 646 to 668; these read MNNI…VEKL, LFVQ…LEAM, QLLC…SLRH, LKQL…TTRY, and LMKL…EFSS.

It belongs to the protein prenyltransferase subunit alpha family. Heterotrimer composed of the alpha subunit RGTA, the beta subunit RGTB and REP; within this trimer, RGTA and RGTB form the catalytic component, while REP mediates peptide substrate binding.

The enzyme catalyses geranylgeranyl diphosphate + L-cysteinyl-[protein] = S-geranylgeranyl-L-cysteinyl-[protein] + diphosphate. With respect to regulation, the enzymatic reaction requires the aid of the Rab escort protein REP. Catalyzes the transfer of a geranylgeranyl moiety from geranylgeranyl diphosphate to both cysteines of Rab proteins with the C-terminal sequence -CCXX, CXXX, -XCCX and -XCXC, such as RABA1A, RABA2A, RABF2A and RABG2. Does not seem to be a functional Rab-GGT alpha subunit in vitro. In Arabidopsis thaliana (Mouse-ear cress), this protein is Geranylgeranyl transferase type-2 subunit alpha 2.